Here is a 283-residue protein sequence, read N- to C-terminus: Phosphatidylglycerol--prolipoprotein diacylglyceryl transferase (283 aa).

4 consecutive transmembrane segments (helical) span residues 20–40 (LGPV…FVAM), 51–71 (GGNP…GIIG), 97–117 (ITNG…AVYF), and 123–143 (GVAF…AQAI). An a 1,2-diacyl-sn-glycero-3-phospho-(1'-sn-glycerol)-binding site is contributed by Arg145. A run of 2 helical transmembrane segments spans residues 192 to 212 (VHPT…VLLW) and 255 to 275 (INVI…FALR).

This sequence belongs to the Lgt family.

Its subcellular location is the cell membrane. It catalyses the reaction L-cysteinyl-[prolipoprotein] + a 1,2-diacyl-sn-glycero-3-phospho-(1'-sn-glycerol) = an S-1,2-diacyl-sn-glyceryl-L-cysteinyl-[prolipoprotein] + sn-glycerol 1-phosphate + H(+). It functions in the pathway protein modification; lipoprotein biosynthesis (diacylglyceryl transfer). Functionally, catalyzes the transfer of the diacylglyceryl group from phosphatidylglycerol to the sulfhydryl group of the N-terminal cysteine of a prolipoprotein, the first step in the formation of mature lipoproteins. The sequence is that of Phosphatidylglycerol--prolipoprotein diacylglyceryl transferase from Corynebacterium diphtheriae (strain ATCC 700971 / NCTC 13129 / Biotype gravis).